The primary structure comprises 182 residues: Urease accessory protein UreE (182 aa).

The disordered stretch occupies residues 128 to 182 (PRTEPFRPEGGAYGHGRTLGHDHGPAQGHGHDHPHVHVHISHKPDEDETPDADPA). Residues 146 to 162 (LGHDHGPAQGHGHDHPH) are compositionally biased toward basic and acidic residues. Residues 173–182 (EDETPDADPA) show a composition bias toward acidic residues.

The protein belongs to the UreE family.

It localises to the cytoplasm. Its function is as follows. Involved in urease metallocenter assembly. Binds nickel. Probably functions as a nickel donor during metallocenter assembly. This Cereibacter sphaeroides (strain ATCC 17023 / DSM 158 / JCM 6121 / CCUG 31486 / LMG 2827 / NBRC 12203 / NCIMB 8253 / ATH 2.4.1.) (Rhodobacter sphaeroides) protein is Urease accessory protein UreE.